The sequence spans 323 residues: rRNA 2'-O-methyltransferase fibrillarin (323 aa).

The tract at residues 1 to 80 (MSFRPGSRGG…GARGGAKGGA (80 aa)) is disordered. Over residues 7–78 (SRGGARGGRG…RGGARGGAKG (72 aa)) the composition is skewed to gly residues. Residues Arg8, Arg12, Arg15, Arg19, Arg25, Arg29, Arg35, Arg39, Arg43, Arg49, Arg53, Arg57, Arg61, Arg65, Arg69, and Arg73 each carry the asymmetric dimethylarginine modification. Residues 175 to 176 (TS), 194 to 195 (EF), 219 to 220 (DA), and 239 to 242 (DVAQ) contribute to the S-adenosyl-L-methionine site.

It belongs to the methyltransferase superfamily. Fibrillarin family. In terms of assembly, component of box C/D small nucleolar ribonucleoprotein (snoRNP) particles that contain SNU13, NOP1, SIK1/NOP56 and NOP58, plus a guide RNA. By homology to other fibrillarins, some or all of the N-terminal domain arginines are modified to asymmetric dimethylarginine (DMA).

The protein localises to the nucleus. Its subcellular location is the nucleolus. It carries out the reaction L-glutaminyl-[histone H2A] + S-adenosyl-L-methionine = N(5)-methyl-L-glutaminyl-[histone H2A] + S-adenosyl-L-homocysteine + H(+). Functionally, S-adenosyl-L-methionine-dependent methyltransferase that has the ability to methylate both RNAs and proteins. Involved in pre-rRNA processing. Utilizes the methyl donor S-adenosyl-L-methionine to catalyze the site-specific 2'-hydroxyl methylation of ribose moieties in pre-ribosomal RNA. Site specificity is provided by a guide RNA that base pairs with the substrate. Methylation occurs at a characteristic distance from the sequence involved in base pairing with the guide RNA. Also acts as a protein methyltransferase by mediating methylation of 'Gln-105' of histone H2A (H2AQ105me), a modification that impairs binding of the FACT complex and is specifically present at 35S ribosomal DNA locus. The polypeptide is rRNA 2'-O-methyltransferase fibrillarin (NOP1) (Candida glabrata (strain ATCC 2001 / BCRC 20586 / JCM 3761 / NBRC 0622 / NRRL Y-65 / CBS 138) (Yeast)).